The following is a 214-amino-acid chain: Glutathione S-transferase F11 (214 aa).

Positions 2-82 (VVKVYGQIKA…YYATKYADQG (81 aa)) constitute a GST N-terminal domain. Residues 11–12 (AA), 40–41 (QK), 53–54 (QV), and 66–67 (ES) each bind glutathione. In terms of domain architecture, GST C-terminal spans 89 to 214 (TLEGRAIVDQ…WKKLMELAAY (126 aa)).

The protein belongs to the GST superfamily. Phi family.

Its subcellular location is the cytoplasm. It is found in the cytosol. The catalysed reaction is RX + glutathione = an S-substituted glutathione + a halide anion + H(+). In terms of biological role, may be involved in the conjugation of reduced glutathione to a wide number of exogenous and endogenous hydrophobic electrophiles and have a detoxification role against certain herbicides. This is Glutathione S-transferase F11 from Arabidopsis thaliana (Mouse-ear cress).